Reading from the N-terminus, the 145-residue chain is Mini-ribonuclease 3 (145 aa).

Asp27 is an active-site residue.

Belongs to the MrnC RNase family. As to quaternary structure, homodimer. It depends on Mg(2+) as a cofactor.

It is found in the cytoplasm. Involved in correct processing of both the 5' and 3' ends of 23S rRNA precursor. Processes 30S rRNA precursor transcript even in absence of ribonuclease 3 (Rnc); Rnc processes 30S rRNA into smaller rRNA precursors. The chain is Mini-ribonuclease 3 from Kosmotoga olearia (strain ATCC BAA-1733 / DSM 21960 / TBF 19.5.1).